We begin with the raw amino-acid sequence, 475 residues long: MSPQTETKASVGFKAGVKDYKLTYHTPDYETKDTDILAAFRVTPQPGVPPEEAGAAVAAESSTGTWTTVWTDGLTSLDRYKGRCYHIEPVAGEESQFIAYVAYPLDLFEEGSVTNMFTSIVGNVFGFKALRALRLEDLRIPPAYSKTFQGPPHGIQVERDKLNKYGRPLLGCTIKPKLGLSAKNYGRAVYECLRGGLDFTKDDENVNSQPFMRWRDRFLFCAEAIYKAQAETGEIKGHYLNATAGTCEEMIKRAVFARELGVPIVMHDYLTGGFTANTSLAHYCRDNGLLLHIHRAMHAVIDRQKNHGMHFRVLAKALRMSGGDHIHAGTVVGKLEGEREITLGFVDLLRDDYIEKDRSRGIYFTQDWVSLPGVLPVASGGIHVWHMPALTEIFGDDSVLQFGGGTLGHPWGNAPGAVANRVALEACVQARNEGRDLACEGNEIIRAAAKWSPELAAACEVWKEIKFEFPAMDTL.

Residues 1 to 2 (MS) constitute a propeptide that is removed on maturation. The residue at position 3 (proline 3) is an N-acetylproline. Lysine 14 carries the post-translational modification N6,N6,N6-trimethyllysine. 2 residues coordinate substrate: asparagine 123 and threonine 173. Lysine 175 (proton acceptor) is an active-site residue. Lysine 177 contacts substrate. Mg(2+)-binding residues include lysine 201, aspartate 203, and glutamate 204. Position 201 is an N6-carboxylysine (lysine 201). Histidine 294 functions as the Proton acceptor in the catalytic mechanism. Positions 295, 327, and 379 each coordinate substrate.

It belongs to the RuBisCO large chain family. Type I subfamily. In terms of assembly, heterohexadecamer of 8 large chains and 8 small chains; disulfide-linked. The disulfide link is formed within the large subunit homodimers. The cofactor is Mg(2+). Post-translationally, the disulfide bond which can form in the large chain dimeric partners within the hexadecamer appears to be associated with oxidative stress and protein turnover.

Its subcellular location is the plastid. The protein resides in the chloroplast. The catalysed reaction is 2 (2R)-3-phosphoglycerate + 2 H(+) = D-ribulose 1,5-bisphosphate + CO2 + H2O. It catalyses the reaction D-ribulose 1,5-bisphosphate + O2 = 2-phosphoglycolate + (2R)-3-phosphoglycerate + 2 H(+). Its function is as follows. RuBisCO catalyzes two reactions: the carboxylation of D-ribulose 1,5-bisphosphate, the primary event in carbon dioxide fixation, as well as the oxidative fragmentation of the pentose substrate in the photorespiration process. Both reactions occur simultaneously and in competition at the same active site. The chain is Ribulose bisphosphate carboxylase large chain from Ostrya virginiana (American hophornbeam).